We begin with the raw amino-acid sequence, 336 residues long: Toluate 1,2-dioxygenase electron transfer component (336 aa).

One can recognise a 2Fe-2S ferredoxin-type domain in the interval 3-97; sequence HKVATDFEDG…DCVIRVPAAS (95 aa). Residues C40, C45, C48, and C81 each coordinate [2Fe-2S] cluster. Positions 99–336 are ferredoxin-reductase; that stretch reads VCKTQQAGYQ…FYYEKFAASA (238 aa). Positions 104–204 constitute an FAD-binding FR-type domain; it reads QAGYQAAISN…AGPLGAFYLR (101 aa).

The protein belongs to the bacterial ring-hydroxylating dioxygenase ferredoxin reductase family. In terms of assembly, this dioxygenase system consists of three proteins: the two subunits of the hydroxylase component (XylX and XylY), and an electron transfer component (XylZ). FAD serves as cofactor. The cofactor is [2Fe-2S] cluster.

It catalyses the reaction 2 reduced [2Fe-2S]-[ferredoxin] + NAD(+) + H(+) = 2 oxidized [2Fe-2S]-[ferredoxin] + NADH. Electron transfer component of toluate 1,2-dioxygenase system. This chain is Toluate 1,2-dioxygenase electron transfer component (xylZ), found in Pseudomonas putida (Arthrobacter siderocapsulatus).